Consider the following 332-residue polypeptide: RNA polymerase II holoenzyme cyclin-like subunit (332 aa).

The Cyclin N-terminal domain occupies 74-175 (RIYCYFLIMK…LIEELQSYMI (102 aa)).

Belongs to the cyclin family. Cyclin C subfamily. As to quaternary structure, component of the SRB8-11 complex, a regulatory module of the Mediator complex.

It is found in the nucleus. Functionally, component of the SRB8-11 complex. The SRB8-11 complex is a regulatory module of the Mediator complex which is itself involved in regulation of basal and activated RNA polymerase II-dependent transcription. The SRB8-11 complex may be involved in the transcriptional repression of a subset of genes regulated by Mediator. It may inhibit the association of the Mediator complex with RNA polymerase II to form the holoenzyme complex. The SRB8-11 complex phosphorylates the C-terminal domain (CTD) of the largest subunit of RNA polymerase II. The polypeptide is RNA polymerase II holoenzyme cyclin-like subunit (SSN8) (Eremothecium gossypii (strain ATCC 10895 / CBS 109.51 / FGSC 9923 / NRRL Y-1056) (Yeast)).